Reading from the N-terminus, the 197-residue chain is Isopentenyl-diphosphate Delta-isomerase (197 aa).

Residues H41 and H48 each coordinate Mn(2+). The Nudix hydrolase domain maps to 46–183 (RLHRAFSVFL…AWFMTVLDAA (138 aa)). C83 is a catalytic residue. C83 lines the Mg(2+) pocket. H85 contributes to the Mn(2+) binding site. E103 is a binding site for Mg(2+). Residues E130 and E132 each coordinate Mn(2+). Residue E132 is part of the active site.

The protein belongs to the IPP isomerase type 1 family. Mg(2+) is required as a cofactor. The cofactor is Mn(2+).

It localises to the cytoplasm. The catalysed reaction is isopentenyl diphosphate = dimethylallyl diphosphate. The protein operates within isoprenoid biosynthesis; dimethylallyl diphosphate biosynthesis; dimethylallyl diphosphate from isopentenyl diphosphate: step 1/1. In terms of biological role, catalyzes the 1,3-allylic rearrangement of the homoallylic substrate isopentenyl (IPP) to its highly electrophilic allylic isomer, dimethylallyl diphosphate (DMAPP). The protein is Isopentenyl-diphosphate Delta-isomerase of Streptomyces coelicolor (strain ATCC BAA-471 / A3(2) / M145).